The chain runs to 471 residues: Glutamate--tRNA ligase (471 aa).

The 'HIGH' region signature appears at Pro9 to Gly19. Zn(2+) contacts are provided by Cys98, Cys100, Cys125, and His127. The 'KMSKS' region motif lies at Lys237–Arg241. Lys240 serves as a coordination point for ATP.

It belongs to the class-I aminoacyl-tRNA synthetase family. Glutamate--tRNA ligase type 1 subfamily. In terms of assembly, monomer. It depends on Zn(2+) as a cofactor.

It localises to the cytoplasm. The enzyme catalyses tRNA(Glu) + L-glutamate + ATP = L-glutamyl-tRNA(Glu) + AMP + diphosphate. In terms of biological role, catalyzes the attachment of glutamate to tRNA(Glu) in a two-step reaction: glutamate is first activated by ATP to form Glu-AMP and then transferred to the acceptor end of tRNA(Glu). The protein is Glutamate--tRNA ligase of Escherichia coli O1:K1 / APEC.